We begin with the raw amino-acid sequence, 241 residues long: tRNA pseudouridine synthase A (241 aa).

Asp-52 serves as the catalytic Nucleophile. Residue Tyr-111 coordinates substrate.

This sequence belongs to the tRNA pseudouridine synthase TruA family. In terms of assembly, homodimer.

The enzyme catalyses uridine(38/39/40) in tRNA = pseudouridine(38/39/40) in tRNA. Functionally, formation of pseudouridine at positions 38, 39 and 40 in the anticodon stem and loop of transfer RNAs. The chain is tRNA pseudouridine synthase A from Ureaplasma urealyticum serovar 10 (strain ATCC 33699 / Western).